The following is a 326-amino-acid chain: Putative replication protein B (326 aa).

Belongs to the ParB family.

In Sinorhizobium fredii (strain NBRC 101917 / NGR234), this protein is Putative replication protein B.